We begin with the raw amino-acid sequence, 886 residues long: Protein translocase subunit SecA (886 aa).

ATP-binding positions include Gln-85, 103-107, and Asp-492; that span reads GEGKT. Over residues 841–864 the composition is skewed to basic and acidic residues; that stretch reads RVVENRYAEEGPKQPARRENKVGR. A disordered region spans residues 841–866; the sequence is RVVENRYAEEGPKQPARRENKVGRND. Residues Cys-868, Cys-870, Cys-879, and Cys-880 each coordinate Zn(2+).

The protein belongs to the SecA family. As to quaternary structure, monomer and homodimer. Part of the essential Sec protein translocation apparatus which comprises SecA, SecYEG and auxiliary proteins SecDF. Other proteins may also be involved. Zn(2+) serves as cofactor.

It localises to the cell membrane. The protein resides in the cytoplasm. It catalyses the reaction ATP + H2O + cellular proteinSide 1 = ADP + phosphate + cellular proteinSide 2.. Part of the Sec protein translocase complex. Interacts with the SecYEG preprotein conducting channel. Has a central role in coupling the hydrolysis of ATP to the transfer of proteins into and across the cell membrane, serving as an ATP-driven molecular motor driving the stepwise translocation of polypeptide chains across the membrane. This Pelotomaculum thermopropionicum (strain DSM 13744 / JCM 10971 / SI) protein is Protein translocase subunit SecA.